The sequence spans 401 residues: Nodal homolog 3-A (401 aa).

The N-terminal stretch at 1–18 (MAFLSLFLCLVFSSPLMA) is a signal peptide. A propeptide spanning residues 19–274 (MPPALQGRKA…KVNGFRRLRR (256 aa)) is cleaved from the precursor. 3 N-linked (GlcNAc...) asparagine glycosylation sites follow: asparagine 168, asparagine 337, and asparagine 344. 2 disulfide bridges follow: cysteine 299-cysteine 365 and cysteine 328-cysteine 396.

The protein belongs to the TGF-beta family. As to quaternary structure, monomer. The propeptide region interacts with bmp4 in a non-covalent manner. In terms of tissue distribution, expressed in the dorsal marginal region of late blastula, becoming restricted to the Spemann organizer at the early gastrula stage.

It is found in the secreted. Functionally, exhibits mesoderm-dorsalizing activity and neural-inducing activity, but lacks mesoderm-inducing activity. Regulates the expression of specific mesodermal and neural genes. Induces convergent extension movements at the embryonic midline by activating the fgf signaling pathway to induce t/bra expression in the organizer region. Acts with wnt11 to induce Spemann organizer cells and induce axis formation. The unprocessed protein antagonizes bmp-signaling. The sequence is that of Nodal homolog 3-A from Xenopus tropicalis (Western clawed frog).